The following is a 509-amino-acid chain: 3-isopropylmalate dehydratase large subunit, chloroplastic (509 aa).

Residues 1–24 show a composition bias toward low complexity; that stretch reads MASVISSSPFLCKSSSKSDLGISS. The tract at residues 1–25 is disordered; the sequence is MASVISSSPFLCKSSSKSDLGISSF. The transit peptide at 1-47 directs the protein to the chloroplast; sequence MASVISSSPFLCKSSSKSDLGISSFPKSSQISIHRCQKKSISRKIVS. [4Fe-4S] cluster-binding residues include C376, C445, and C448.

It belongs to the aconitase/IPM isomerase family. In terms of assembly, heterodimer of the large LEUC/IIL1 subunit and the small LEUD (SSU1, SSU2 or SSU3) subunits. [4Fe-4S] cluster serves as cofactor. As to expression, expressed in roots, leaves, stems and flowers. Expressed at low levels in siliques.

Its subcellular location is the plastid. It is found in the chloroplast stroma. It carries out the reaction (2R,3S)-3-isopropylmalate = (2S)-2-isopropylmalate. The catalysed reaction is a 2-(omega-methylsulfanyl)alkylmalate = a 2-(omega-methylsulfanyl)alkylmaleate + H2O. It catalyses the reaction 2-(3-methylsulfanyl)propylmalate = 2-(2-methylsulfanyl)propylmaleate + H2O. The enzyme catalyses a 3-(omega-methylsulfanyl)alkylmalate = a 2-(omega-methylsulfanyl)alkylmaleate + H2O. It carries out the reaction 2-(2-methylsulfanyl)ethylmalate = 2-(2-methylsulfanyl)ethylmaleate + H2O. The catalysed reaction is 3-(2-methylsulfanyl)ethylmalate = 2-(2-methylsulfanyl)ethylmaleate + H2O. It catalyses the reaction 3-(3-methylsulfanyl)propylmalate = 2-(2-methylsulfanyl)propylmaleate + H2O. It functions in the pathway amino-acid biosynthesis; L-leucine biosynthesis; L-leucine from 3-methyl-2-oxobutanoate: step 2/4. In terms of biological role, catalyzes the isomerization between 2-isopropylmalate and 3-isopropylmalate, via the formation of 2-isopropylmaleate. Functions in both the biosynthesis of leucine and in the methionine chain elongation pathway of aliphatic glucosinolate formation. The chain is 3-isopropylmalate dehydratase large subunit, chloroplastic from Arabidopsis thaliana (Mouse-ear cress).